The sequence spans 209 residues: Large ribosomal subunit protein uL3 (209 aa).

A disordered region spans residues 127 to 166 (NFGGGSRTHGQSDRLRAPGSVGGSSDPSRTFKGTRMAGRM).

The protein belongs to the universal ribosomal protein uL3 family. As to quaternary structure, part of the 50S ribosomal subunit. Forms a cluster with proteins L14 and L19.

One of the primary rRNA binding proteins, it binds directly near the 3'-end of the 23S rRNA, where it nucleates assembly of the 50S subunit. The polypeptide is Large ribosomal subunit protein uL3 (Chlorobaculum tepidum (strain ATCC 49652 / DSM 12025 / NBRC 103806 / TLS) (Chlorobium tepidum)).